Here is a 390-residue protein sequence, read N- to C-terminus: MKKQELNQAFTHVFGREADATFFSPGRINLIGEHTDYNGGRVFPAAITLGTYGAARKRDDKLLRFYSANFEELGIIEISLDHLIFNKKDSWTNYPKGVIKYLQEAGHSIDTGMDVYVFGNIPNGSGLSSSSSLELLIGIMAEELFDLKLDRLDLVKIGKRTENDFIGVNSGIMDQFAIGMGAEKKAIYLDTKTLEYDLVPLDLGDNVIVIMNTNKRRELADSKYNERRTECEKAVEELNVLLDIKSLGELDEETFDEYAYLIKDAKRIKRARHAVSENQRTLKAKKALAAGDLEKFGRLVNASHVSLEHDYEVTGIELDTLAHTAWEQEGVLGARMTGAGFGGCGIAIVAKDKVAALKENVGRIYTETVGYAPAFYIAEIAGGSRVLSRK.

Residue 33 to 36 coordinates substrate; it reads EHTD. ATP is bound by residues Ser-67 and 124-130; that span reads GSGLSSS. Mg(2+) contacts are provided by Ser-130 and Glu-162. The Proton acceptor role is filled by Asp-174. Tyr-224 contributes to the substrate binding site.

The protein belongs to the GHMP kinase family. GalK subfamily.

The protein resides in the cytoplasm. The catalysed reaction is alpha-D-galactose + ATP = alpha-D-galactose 1-phosphate + ADP + H(+). It participates in carbohydrate metabolism; galactose metabolism. Catalyzes the transfer of the gamma-phosphate of ATP to D-galactose to form alpha-D-galactose-1-phosphate (Gal-1-P). In Streptococcus mutans serotype c (strain ATCC 700610 / UA159), this protein is Galactokinase.